We begin with the raw amino-acid sequence, 359 residues long: 3-dehydroquinate synthase (359 aa).

Residues 69–74 (DAETGK), 103–107 (GAATD), 127–128 (TT), lysine 140, and lysine 149 contribute to the NAD(+) site. Residues glutamate 182, histidine 244, and histidine 260 each contribute to the Zn(2+) site.

Belongs to the sugar phosphate cyclases superfamily. Dehydroquinate synthase family. Co(2+) serves as cofactor. Zn(2+) is required as a cofactor. Requires NAD(+) as cofactor.

The protein localises to the cytoplasm. It catalyses the reaction 7-phospho-2-dehydro-3-deoxy-D-arabino-heptonate = 3-dehydroquinate + phosphate. It participates in metabolic intermediate biosynthesis; chorismate biosynthesis; chorismate from D-erythrose 4-phosphate and phosphoenolpyruvate: step 2/7. In terms of biological role, catalyzes the conversion of 3-deoxy-D-arabino-heptulosonate 7-phosphate (DAHP) to dehydroquinate (DHQ). This chain is 3-dehydroquinate synthase, found in Corynebacterium diphtheriae (strain ATCC 700971 / NCTC 13129 / Biotype gravis).